The sequence spans 82 residues: RNA-binding protein Hfq (82 aa).

One can recognise a Sm domain in the interval 9-68; it reads DPFLNTLRKEHVPVSIYLVNGIKLQGKVDSFDQYVIMLKNTVSQMVYKHAISTIVPGRPV.

The protein belongs to the Hfq family. In terms of assembly, homohexamer.

Functionally, RNA chaperone that binds small regulatory RNA (sRNAs) and mRNAs to facilitate mRNA translational regulation in response to envelope stress, environmental stress and changes in metabolite concentrations. Also binds with high specificity to tRNAs. In Methylococcus capsulatus (strain ATCC 33009 / NCIMB 11132 / Bath), this protein is RNA-binding protein Hfq.